Consider the following 537-residue polypeptide: [Pyruvate dehydrogenase [acetyl-transferring]]-phosphatase 1, mitochondrial (537 aa).

The transit peptide at 1 to 71 (MPAPTQLFFP…WWQYTQGRRY (71 aa)) directs the protein to the mitochondrion. One can recognise a PPM-type phosphatase domain in the interval 109-525 (ILGFDSNQLP…DDITIIVVQF (417 aa)). Positions 144 and 145 each coordinate Mn(2+). The residue at position 202 (lysine 202) is an N6-acetyllysine. Aspartate 418 and aspartate 516 together coordinate Mn(2+).

The protein belongs to the PP2C family. Heterodimer of a catalytic (PDP1) and a regulatory (PDPR) subunit. Requires Mn(2+) as cofactor. Mg(2+) is required as a cofactor.

It is found in the mitochondrion. It carries out the reaction O-phospho-L-seryl-[pyruvate dehydrogenase E1 alpha subunit] + H2O = L-seryl-[pyruvate dehydrogenase E1 alpha subunit] + phosphate. With respect to regulation, magnesium-dependent and calcium-stimulated. PDP1 activity strongly depends on its Ca(2+)-dependent binding to the lipoyl domain of E2 subunit of component of the pyruvate dehydrogenase complex. Its function is as follows. Mitochondrial enzyme that catalyzes the dephosphorylation and concomitant reactivation of the alpha subunit of the E1 component of the pyruvate dehydrogenase complex (PDC), thereby stimulating the conversion of pyruvate into acetyl-CoA. The protein is [Pyruvate dehydrogenase [acetyl-transferring]]-phosphatase 1, mitochondrial of Homo sapiens (Human).